Here is a 239-residue protein sequence, read N- to C-terminus: MSREEDEKLLFPSFAFPAECFPEAATSGGEQKKARQRRRRKVKPEAAAALAGESGGDEQAKKRRLSDEQARFLEMSFKKERKLETPRKVQLAAELGLDAKQVAVWFQNRRARHKSKLMEEEFAKLRSAHDAVVLQNCHLETELLKLKERLADVEEEKAKLAAVAAATTGGGGGGGGGSSSPTSSSFSTVTYHPALAGQFGVEAAAEEADLTYMSEYAYNSYMLELAAAGYCGGVYDQFS.

The segment at 25 to 65 (ATSGGEQKKARQRRRRKVKPEAAAALAGESGGDEQAKKRRL) is disordered. Positions 58–117 (EQAKKRRLSDEQARFLEMSFKKERKLETPRKVQLAAELGLDAKQVAVWFQNRRARHKSKL) form a DNA-binding region, homeobox. Positions 107 to 168 (QNRRARHKSK…KLAAVAAATT (62 aa)) form a coiled coil.

The protein belongs to the HD-ZIP homeobox family. Class I subfamily. Expressed in seedlings, roots, stems, leaf sheaths and panicles.

The protein resides in the nucleus. In terms of biological role, probable transcription factor. The chain is Homeobox-leucine zipper protein HOX12 (HOX12) from Oryza sativa subsp. japonica (Rice).